Reading from the N-terminus, the 55-residue chain is Large ribosomal subunit protein bL33 (55 aa).

Post-translationally, the protein is methylated on either Ala-2 or Lys-3.

The chain is Large ribosomal subunit protein bL33 from Rhodopseudomonas palustris (strain ATCC BAA-98 / CGA009).